The sequence spans 200 residues: Probable molybdenum cofactor guanylyltransferase (200 aa).

Residues 9 to 11 (LAG), K21, D69, and D100 contribute to the GTP site. D100 provides a ligand contact to Mg(2+).

This sequence belongs to the MobA family. The cofactor is Mg(2+).

The protein localises to the cytoplasm. The enzyme catalyses Mo-molybdopterin + GTP + H(+) = Mo-molybdopterin guanine dinucleotide + diphosphate. Its function is as follows. Transfers a GMP moiety from GTP to Mo-molybdopterin (Mo-MPT) cofactor (Moco or molybdenum cofactor) to form Mo-molybdopterin guanine dinucleotide (Mo-MGD) cofactor. This chain is Probable molybdenum cofactor guanylyltransferase, found in Bacillus cereus (strain AH820).